The sequence spans 342 residues: A-type ATP synthase subunit C (342 aa).

It belongs to the V-ATPase V0D/AC39 subunit family. As to quaternary structure, has multiple subunits with at least A(3), B(3), C, D, E, F, H, I and proteolipid K(x).

It is found in the cell membrane. Its function is as follows. Component of the A-type ATP synthase that produces ATP from ADP in the presence of a proton gradient across the membrane. This chain is A-type ATP synthase subunit C, found in Archaeoglobus fulgidus (strain ATCC 49558 / DSM 4304 / JCM 9628 / NBRC 100126 / VC-16).